The chain runs to 124 residues: Glutaredoxin-2 (124 aa).

A disulfide bridge connects residues cysteine 13 and cysteine 16.

This sequence belongs to the glutaredoxin family. Homodimer.

It localises to the host cytoplasm. Functionally, glutaredoxin necessary for virion morphogenesis and virus replication. Functions as a thiol-disulfide transfer protein between membrane-associated OPG128 and substrates OPG095 or OPG053. The complete pathway for formation of disulfide bonds in intracellular virion membrane proteins sequentially involves oxidation of OPG072, OPG128 and OPG088. Exhibit thioltransferase and dehydroascorbate reductase activities in vitro. This is Glutaredoxin-2 (OPG088) from Oryctolagus cuniculus (Rabbit).